The sequence spans 172 residues: MEYFNVGKIVNTQGLQGEMRVLSVSDFAEERFKKGSQLALFDDKDQFVQEVTIVSHRKQKNFDIIKFKDMYHINAIEKYKGYTLKVSKANQGDLQEGEFYYHQIIGMAVYEKDRLIGYVKEILQPGANDVWVVKRQGKRDLLLPYIPPVVLSVDVPNKRVDVELMEGLDDED.

Positions 96–168 (EGEFYYHQII…RVDVELMEGL (73 aa)) constitute a PRC barrel domain.

It belongs to the RimM family. In terms of assembly, binds ribosomal protein uS19.

The protein resides in the cytoplasm. In terms of biological role, an accessory protein needed during the final step in the assembly of 30S ribosomal subunit, possibly for assembly of the head region. Essential for efficient processing of 16S rRNA. May be needed both before and after RbfA during the maturation of 16S rRNA. It has affinity for free ribosomal 30S subunits but not for 70S ribosomes. This is Ribosome maturation factor RimM from Streptococcus pyogenes serotype M6 (strain ATCC BAA-946 / MGAS10394).